A 157-amino-acid chain; its full sequence is Transcription elongation factor GreA (157 aa).

Residues 46–73 are a coiled coil; that stretch reads AEYHSARERQSFIEGRIAELEEIISAAE.

The protein belongs to the GreA/GreB family.

Necessary for efficient RNA polymerase transcription elongation past template-encoded arresting sites. The arresting sites in DNA have the property of trapping a certain fraction of elongating RNA polymerases that pass through, resulting in locked ternary complexes. Cleavage of the nascent transcript by cleavage factors such as GreA or GreB allows the resumption of elongation from the new 3'terminus. GreA releases sequences of 2 to 3 nucleotides. In Acidiphilium cryptum (strain JF-5), this protein is Transcription elongation factor GreA.